Here is a 100-residue protein sequence, read N- to C-terminus: Bombyxin A-2 homolog (100 aa).

An N-terminal signal peptide occupies residues 1-18; sequence MRTQVLFLIVVLAVMASG. 3 cysteine pairs are disulfide-bonded: C26–C85, C38–C98, and C84–C89. Positions 47-75 are cleaved as a propeptide — c peptide like; sequence PPYISSENEGYGWKWLERQRARQLDEARG.

It belongs to the insulin family. In terms of assembly, heterodimer of a B chain and an A chain linked by two disulfide bonds.

It is found in the secreted. Its function is as follows. Brain peptide responsible for activation of prothoracic glands to produce ecdysone in insects. This Samia cynthia (Ailanthus silkmoth) protein is Bombyxin A-2 homolog (SBXA2).